Consider the following 109-residue polypeptide: Arminin 6560 (109 aa).

A signal peptide spans 1-21 (MKCLFGFLFIMLVAFLQDVHG). Residues 22–77 (VDSCIGKPCKVKGEDMKDIKEKKIEDIKEEIKNVKKEIFEDVDDELLDDNIRDDKI) constitute a propeptide that is removed on maturation. An Isoleucine amide modification is found at Ile106.

The protein belongs to the arminin family. In terms of tissue distribution, expressed in the ectodermal epithelium.

Its subcellular location is the secreted. The protein localises to the target cell membrane. Antimicrobial peptide with a broad-spectrum antimicrobial activity. Keeps its antibacterial activity under a wide range of salt concentrations that mimic physiological conditions of human blood, which is surprising, since Hydra is an obligate freshwater animal with nearly no salt tolerance. Does not affect red blood cells. The chain is Arminin 6560 from Hydra vulgaris (Hydra).